A 439-amino-acid chain; its full sequence is Histidinol dehydrogenase (439 aa).

Residues Tyr129, Gln193, and Asn222 each contribute to the NAD(+) site. Positions 245, 267, and 270 each coordinate substrate. Gln267 and His270 together coordinate Zn(2+). Catalysis depends on proton acceptor residues Glu336 and His337. Residues His337, Asp370, Glu424, and His429 each contribute to the substrate site. Asp370 contacts Zn(2+). His429 is a Zn(2+) binding site.

It belongs to the histidinol dehydrogenase family. Zn(2+) is required as a cofactor.

The enzyme catalyses L-histidinol + 2 NAD(+) + H2O = L-histidine + 2 NADH + 3 H(+). The protein operates within amino-acid biosynthesis; L-histidine biosynthesis; L-histidine from 5-phospho-alpha-D-ribose 1-diphosphate: step 9/9. Catalyzes the sequential NAD-dependent oxidations of L-histidinol to L-histidinaldehyde and then to L-histidine. In Cutibacterium acnes (strain DSM 16379 / KPA171202) (Propionibacterium acnes), this protein is Histidinol dehydrogenase.